We begin with the raw amino-acid sequence, 162 residues long: MKLIIAEKIKAVEQLTDKLNQAKTVIIFEYTGIPVSFFTELRSELRKSDCEMKIYTNNIMKRAAKATNYDGLISYFKGNKALVYSSTDLISPAKIIYEFSKKNSMIKIISGVIENKVASLDEINSLASLPSKEILLTMLVSGMMTPLMQLSACLCMLSKIKK.

The protein belongs to the universal ribosomal protein uL10 family. In terms of assembly, part of the ribosomal stalk of the 50S ribosomal subunit. The N-terminus interacts with L11 and the large rRNA to form the base of the stalk. The C-terminus forms an elongated spine to which L12 dimers bind in a sequential fashion forming a multimeric L10(L12)X complex.

Forms part of the ribosomal stalk, playing a central role in the interaction of the ribosome with GTP-bound translation factors. The polypeptide is Large ribosomal subunit protein uL10 (Phytoplasma mali (strain AT)).